We begin with the raw amino-acid sequence, 296 residues long: Protoheme IX farnesyltransferase (296 aa).

9 helical membrane passes run 11–31, 35–55, 84–104, 107–127, 132–152, 162–182, 208–228, 229–249, and 264–284; these read PGII…AAQG, YPLF…GCVF, VTLV…YIAA, LAMW…SLYM, VYGT…GYCA, LILL…IAIF, ITLY…GGYA, GYKY…MALS, and LFVF…VDSM.

This sequence belongs to the UbiA prenyltransferase family. Protoheme IX farnesyltransferase subfamily.

The protein resides in the cell inner membrane. It catalyses the reaction heme b + (2E,6E)-farnesyl diphosphate + H2O = Fe(II)-heme o + diphosphate. It participates in porphyrin-containing compound metabolism; heme O biosynthesis; heme O from protoheme: step 1/1. Functionally, converts heme B (protoheme IX) to heme O by substitution of the vinyl group on carbon 2 of heme B porphyrin ring with a hydroxyethyl farnesyl side group. The polypeptide is Protoheme IX farnesyltransferase (Pectobacterium carotovorum subsp. carotovorum (strain PC1)).